Here is a 427-residue protein sequence, read N- to C-terminus: Histidine--tRNA ligase (427 aa).

Belongs to the class-II aminoacyl-tRNA synthetase family. In terms of assembly, homodimer.

It localises to the cytoplasm. It catalyses the reaction tRNA(His) + L-histidine + ATP = L-histidyl-tRNA(His) + AMP + diphosphate + H(+). The sequence is that of Histidine--tRNA ligase from Proteus mirabilis (strain HI4320).